A 358-amino-acid chain; its full sequence is GMP reductase (358 aa).

NADP(+) contacts are provided by residues 26–27 (SR), K78, 130–132 (DVA), and 181–182 (IG). K(+)-binding residues include G182, G184, and C187. C187 (thioimidate intermediate) is an active-site residue. Residue T189 is the Proton donor/acceptor of the active site. Residue R190 coordinates K(+). Residues 220 to 222 (DGG), 243 to 244 (GG), 269 to 271 (GMS), and 287 to 291 (RASEG) contribute to the GMP site. NADP(+) is bound by residues M270, 286 to 287 (YR), and 315 to 318 (SACT).

Belongs to the IMPDH/GMPR family. GuaC type 1 subfamily. In terms of assembly, homotetramer.

It carries out the reaction IMP + NH4(+) + NADP(+) = GMP + NADPH + 2 H(+). Functionally, catalyzes the irreversible NADPH-dependent deamination of GMP to IMP. It functions in the conversion of nucleobase, nucleoside and nucleotide derivatives of G to A nucleotides, and in maintaining the intracellular balance of A and G nucleotides. This chain is GMP reductase, found in Caenorhabditis elegans.